Here is a 272-residue protein sequence, read N- to C-terminus: 2,3,4,5-tetrahydropyridine-2,6-dicarboxylate N-succinyltransferase (272 aa).

Arg-104 and Asp-141 together coordinate substrate.

It belongs to the transferase hexapeptide repeat family. Homotrimer.

Its subcellular location is the cytoplasm. The catalysed reaction is (S)-2,3,4,5-tetrahydrodipicolinate + succinyl-CoA + H2O = (S)-2-succinylamino-6-oxoheptanedioate + CoA. It participates in amino-acid biosynthesis; L-lysine biosynthesis via DAP pathway; LL-2,6-diaminopimelate from (S)-tetrahydrodipicolinate (succinylase route): step 1/3. The chain is 2,3,4,5-tetrahydropyridine-2,6-dicarboxylate N-succinyltransferase from Alkalilimnicola ehrlichii (strain ATCC BAA-1101 / DSM 17681 / MLHE-1).